Consider the following 431-residue polypeptide: POU domain, class 2, transcription factor 3 (431 aa).

Disordered stretches follow at residues 1–39 (MVNL…RNGL), 130–180 (LLPQ…EPTD), and 248–267 (DAES…YPTL). Residues 176–250 (DEPTDLEELE…LLEKWLNDAE (75 aa)) form the POU-specific domain. The segment covering 251-267 (SSPSDPSASTPSSYPTL) has biased composition (low complexity). A DNA-binding region (homeobox) is located at residues 274-333 (KRKKRTSIETNIRLTLEKRFQDNPKPSSEEISMIAEQLSMEKEVVRVWFCNRRQKEKRIN). Low complexity-rich tracts occupy residues 352 to 364 (PSGS…VPPV), 374 to 390 (SSCS…PGSG), and 398 to 419 (ASQN…NSSG). Residues 352–419 (PSGSLGPLSV…SSSSSFNSSG (68 aa)) are disordered.

This sequence belongs to the POU transcription factor family. Class-2 subfamily. In terms of assembly, interacts (via the POU domain) with POU2AF1 and POU2AF2 in a DNA-dependent manner; this interaction recruits POU2AF2 to chromatin and increases POU2F3 transactivation activity. As to expression, skin, thymus, stomach and testis.

Its subcellular location is the nucleus. Functionally, transcription factor that binds to the octamer motif (5'-ATTTGCAT-3'). Regulates cell type-specific differentiation pathways. Involved in the regulation of keratinocytes differentiation. The POU2F3-POU2AF2/POU2AF3 complex drives the expression of tuft-cell-specific genes, a rare chemosensory cells that coordinate immune and neural functions within mucosal epithelial tissues. In Mus musculus (Mouse), this protein is POU domain, class 2, transcription factor 3 (Pou2f3).